We begin with the raw amino-acid sequence, 148 residues long: Large ribosomal subunit protein uL15 (148 aa).

A disordered region spans residues 12 to 52; the sequence is ERKNRKRVGRGGGSGWGGTSGKGHKGQNARSGGGVPAWFEG. Positions 21–32 are enriched in gly residues; sequence RGGGSGWGGTSG.

The protein belongs to the universal ribosomal protein uL15 family. In terms of assembly, part of the 50S ribosomal subunit.

Binds to the 23S rRNA. The polypeptide is Large ribosomal subunit protein uL15 (Maridesulfovibrio salexigens (strain ATCC 14822 / DSM 2638 / NCIMB 8403 / VKM B-1763) (Desulfovibrio salexigens)).